Consider the following 192-residue polypeptide: MLVEIKAQLKAHCEVMTALQGELSPAIESAVSLVVDAYKAGNKLLVMGNGGSAADAQHFVAEMVGRFKLERRALPAIALHTDTSILTAIGNDYGFDRIFSRQVEAHAAAGDVVVGISTSGNSPNVQLALELAREKGCRTIALLGKDGGSIKSVAELPLIVPSNDTPRIQEGHITIIHIICDLVERELFVKGK.

Residues 34 to 192 form the SIS domain; sequence VVDAYKAGNK…VERELFVKGK (159 aa). 49–51 contributes to the substrate binding site; that stretch reads NGG. Zn(2+)-binding residues include H58 and E62. Substrate contacts are provided by residues E62, 91 to 92, 117 to 119, S122, and Q169; these read ND and STS. Positions 169 and 177 each coordinate Zn(2+).

The protein belongs to the SIS family. GmhA subfamily. In terms of assembly, homotetramer. Zn(2+) is required as a cofactor.

The protein resides in the cytoplasm. The catalysed reaction is 2 D-sedoheptulose 7-phosphate = D-glycero-alpha-D-manno-heptose 7-phosphate + D-glycero-beta-D-manno-heptose 7-phosphate. It participates in carbohydrate biosynthesis; D-glycero-D-manno-heptose 7-phosphate biosynthesis; D-glycero-alpha-D-manno-heptose 7-phosphate and D-glycero-beta-D-manno-heptose 7-phosphate from sedoheptulose 7-phosphate: step 1/1. In terms of biological role, catalyzes the isomerization of sedoheptulose 7-phosphate in D-glycero-D-manno-heptose 7-phosphate. This Citrifermentans bemidjiense (strain ATCC BAA-1014 / DSM 16622 / JCM 12645 / Bem) (Geobacter bemidjiensis) protein is Phosphoheptose isomerase.